The chain runs to 350 residues: Probable galactose-1-phosphate uridylyltransferase (350 aa).

A disordered region spans residues 31–52 (PWSGQQEKAQKNELPEFDPTNP). Residue cysteine 54 participates in Zn(2+) binding. UDP-alpha-D-glucose contacts are provided by residues 76–77 (ND) and asparagine 152. Histidine 163 contributes to the Zn(2+) binding site. The active-site Tele-UMP-histidine intermediate is the histidine 165. Residues glutamine 167, 314 to 317 (KFMV), and 319 to 320 (FE) each bind UDP-alpha-D-glucose.

It belongs to the galactose-1-phosphate uridylyltransferase type 1 family. In terms of assembly, homodimer. It depends on Zn(2+) as a cofactor.

It carries out the reaction alpha-D-galactose 1-phosphate + UDP-alpha-D-glucose = alpha-D-glucose 1-phosphate + UDP-alpha-D-galactose. Its pathway is carbohydrate metabolism; galactose metabolism. The chain is Probable galactose-1-phosphate uridylyltransferase (Galt) from Drosophila melanogaster (Fruit fly).